The chain runs to 564 residues: NAD-dependent malic enzyme (564 aa).

The active-site Proton donor is tyrosine 102. Arginine 155 serves as a coordination point for NAD(+). Lysine 173 functions as the Proton acceptor in the catalytic mechanism. Glutamate 244, aspartate 245, and aspartate 268 together coordinate a divalent metal cation. 2 residues coordinate NAD(+): aspartate 268 and asparagine 417.

Belongs to the malic enzymes family. Homotetramer. Mg(2+) serves as cofactor. Requires Mn(2+) as cofactor.

It carries out the reaction (S)-malate + NAD(+) = pyruvate + CO2 + NADH. The catalysed reaction is oxaloacetate + H(+) = pyruvate + CO2. The chain is NAD-dependent malic enzyme from Pseudomonas aeruginosa (strain ATCC 15692 / DSM 22644 / CIP 104116 / JCM 14847 / LMG 12228 / 1C / PRS 101 / PAO1).